The primary structure comprises 249 residues: DNA repair protein RecO (249 aa).

The protein belongs to the RecO family.

In terms of biological role, involved in DNA repair and RecF pathway recombination. This is DNA repair protein RecO from Mycoplasma capricolum subsp. capricolum (strain California kid / ATCC 27343 / NCTC 10154).